Reading from the N-terminus, the 216-residue chain is Histone doublet H4-H3 (216 aa).

Basic residues predominate over residues 1-12; it reads MSKAGKKVKAQQ. The segment at 1–23 is disordered; it reads MSKAGKKVKAQQHGHLADHVSVG.

The protein resides in the host nucleus. The protein localises to the host cytoplasm. It is found in the virion. Histone-like protein that is recruited to viral factories during viral replication and participates in viral DNA packaging and virion production probably by forming unstable nucleosome-like particles. May compact the viral DNA. The protein is Histone doublet H4-H3 of Melbournevirus (MelV).